An 85-amino-acid polypeptide reads, in one-letter code: Small ribosomal subunit protein bS16 (85 aa).

It belongs to the bacterial ribosomal protein bS16 family.

This chain is Small ribosomal subunit protein bS16, found in Pelobacter propionicus (strain DSM 2379 / NBRC 103807 / OttBd1).